Reading from the N-terminus, the 453-residue chain is Flavonol-3-O-rhamnosyltransferase (453 aa).

The active-site Proton acceptor is the His24. An anthocyanidin is bound at residue His24. Residue Asp119 is the Charge relay of the active site. Position 150 (His150) interacts with an anthocyanidin. UDP-beta-L-rhamnose is bound by residues Thr280, Ala333, His350, Asn354, Ser355, and Glu358. Ala373 serves as a coordination point for an anthocyanidin.

The protein belongs to the UDP-glycosyltransferase family. In terms of tissue distribution, expressed in leaves, flowers, siliques, and stems. Expressed in the shoot apex.

The catalysed reaction is kaempferol + UDP-beta-L-rhamnose = kaempferol 3-O-alpha-L-rhamnoside + UDP + H(+). It carries out the reaction UDP-beta-L-rhamnose + quercetin = quercitrin + UDP + H(+). It participates in flavonoid metabolism. Functionally, flavonol 3-O-rhamnosyltransferase that catalyzes the transfer of rhamnose from UDP-rhamnose to the 3-OH position of kaempferol and quercetin. Possesses low quercetin 3-O-glucosyltransferase activity in vitro. This is Flavonol-3-O-rhamnosyltransferase from Arabidopsis thaliana (Mouse-ear cress).